We begin with the raw amino-acid sequence, 345 residues long: High mobility group protein 20A (345 aa).

2 disordered regions span residues 1–124 (MENT…TERP) and 167–198 (QYQNTDAYQTYSRKAQSRQKGRQQRQEGVRGV). 2 stretches are compositionally biased toward polar residues: residues 32–48 (LSGSSQAPFHPQSPTLQ) and 57–67 (LQQSGEQQLGN). Basic residues predominate over residues 80-94 (TRRGGWTKGRKRKRS). Positions 101–169 (PKAPLTGYVR…RYTKELQQYQ (69 aa)) form a DNA-binding region, HMG box. Residues 112-124 (MNERREQLRTERP) show a composition bias toward basic and acidic residues. Polar residues predominate over residues 167–180 (QYQNTDAYQTYSRK). A coiled-coil region spans residues 227–290 (SKAREAELRQ…QHLQSVRQAL (64 aa)).

It is found in the nucleus. In terms of biological role, plays a role in neuronal differentiation. This is High mobility group protein 20A (hmg20a) from Xenopus tropicalis (Western clawed frog).